A 37-amino-acid polypeptide reads, in one-letter code: Large ribosomal subunit protein bL36 (37 aa).

It belongs to the bacterial ribosomal protein bL36 family.

This is Large ribosomal subunit protein bL36 from Parasynechococcus marenigrum (strain WH8102).